Consider the following 1047-residue polypeptide: Helicase-like transcription factor CHR27 (1047 aa).

A compositionally biased stretch (low complexity) spans 1-11 (MDSAIEISSGS). Disordered regions lie at residues 1–89 (MDSA…SGSG), 103–130 (RTLP…SGSR), and 145–174 (KRTL…GSRF). Polar residues-rich tracts occupy residues 52–88 (TNQA…SSGS) and 118–128 (SGTNNISNASG). Positions 296–597 (ETSSFNCPGG…YSYFRFLRYD (302 aa)) constitute a Helicase ATP-binding domain. Position 309 to 316 (309 to 316 (DDQGLGKT)) interacts with ATP. Disordered stretches follow at residues 349 to 407 (ADDE…TRAF) and 511 to 533 (VGAS…SEPD). A compositionally biased stretch (basic and acidic residues) spans 354 to 368 (DNAKHESGSHVKPEL). Over residues 370-379 (VSSNSETSVL) the composition is skewed to polar residues. A compositionally biased stretch (acidic residues) spans 385–400 (DENDSSDMEKAEDEEA). A compositionally biased stretch (basic residues) spans 511–523 (VGASKKSKRRGRK). Residues 751 to 790 (CYECNEPPEKPVVTLCGHIFCYECVLEYITGDENTCPVPR) form an RING-type; degenerate zinc finger. The span at 851–868 (QPDSPNSAQHGQMPSSSR) shows a compositional bias: polar residues. The tract at residues 851–873 (QPDSPNSAQHGQMPSSSRPYDDD) is disordered. One can recognise a Helicase C-terminal domain in the interval 887 to 1042 (SPSQGAVKTI…ATRLTVDDLK (156 aa)).

It belongs to the SNF2/RAD54 helicase family. RAD16 subfamily. As to quaternary structure, interacts with SUVR2. Interacts with itself.

The protein resides in the nucleus. Its function is as follows. Probable helicase-like transcription factor involved in transcriptional gene silencing. Associates with SUVR2 and contributes to transcriptional gene silencing at RNA-directed DNA methylation (RdDM) target loci but also at RdDM-independent target loci. May be involved in nucleosome positioning to form ordered nucleosome arrays on chromatin. Associates with SUVR2 and functions redundantly with FRG2. Required for the efficient methylation of a broad range of RdDM target loci. The polypeptide is Helicase-like transcription factor CHR27 (Arabidopsis thaliana (Mouse-ear cress)).